A 261-amino-acid chain; its full sequence is Protein TfpB (261 aa).

The polypeptide is Protein TfpB (tfpB) (Moraxella bovis).